Consider the following 206-residue polypeptide: MELKLLNSNGQEGAVVNASDVVFGRDYNEALIHQVVVAYQANARQGNRAQKDREQVKHTTKKPWRQKGTGRARAGMSSSPLWRGGGRIFPNSPDENFSHKVNKKMHRAGLCSIFSQLAREGRLSVVEDIVLEAPKTKLLADKFKAMGLDSVLVITDTVDENLYLASRNLPHVAVVEPRYADPLSLIYFKKVLVTKAAVAQIEELLS.

The segment at 45–85 (QGNRAQKDREQVKHTTKKPWRQKGTGRARAGMSSSPLWRGG) is disordered. Positions 58 to 70 (HTTKKPWRQKGTG) are enriched in basic residues.

The protein belongs to the universal ribosomal protein uL4 family. As to quaternary structure, part of the 50S ribosomal subunit.

One of the primary rRNA binding proteins, this protein initially binds near the 5'-end of the 23S rRNA. It is important during the early stages of 50S assembly. It makes multiple contacts with different domains of the 23S rRNA in the assembled 50S subunit and ribosome. Its function is as follows. Forms part of the polypeptide exit tunnel. The polypeptide is Large ribosomal subunit protein uL4 (Burkholderia mallei (strain NCTC 10247)).